Reading from the N-terminus, the 384-residue chain is Probable endopolygalacturonase C (384 aa).

The signal sequence occupies residues 1–19 (MVRQLALACGLLAAVAVQA). Positions 20-40 (APAEPAHPMVTEAPDASLLHK) are excised as a propeptide. C45 and C63 are oxidised to a cystine. 2 PbH1 repeats span residues 176-207 (ATDLTLTDITIDNTDGDTDDLAANTDGFDIGE) and 208-229 (STDITITGAKVYNQDDCVAINS). D222 acts as the Proton donor in catalysis. C224 and C240 are joined by a disulfide. Residue H244 is part of the active site. 2 PbH1 repeats span residues 254-280 (RDDNTVKNVTFYDVNVLKSQQAIRIKA) and 288-310 (ISDITYHEIAFSDATDYGIVIEQ). Residue N261 is glycosylated (N-linked (GlcNAc...) asparagine). Disulfide bonds link C349-C354 and C373-C382.

It belongs to the glycosyl hydrolase 28 family.

It localises to the secreted. It carries out the reaction (1,4-alpha-D-galacturonosyl)n+m + H2O = (1,4-alpha-D-galacturonosyl)n + (1,4-alpha-D-galacturonosyl)m.. Involved in maceration and soft-rotting of plant tissue. Hydrolyzes the 1,4-alpha glycosidic bonds of de-esterified pectate in the smooth region of the plant cell wall. This chain is Probable endopolygalacturonase C (pgaC), found in Aspergillus aculeatus.